Reading from the N-terminus, the 874-residue chain is DNA mismatch repair protein MutS (874 aa).

613–620 provides a ligand contact to ATP; sequence GPNMGGKS. The segment at 799 to 820 is disordered; the sequence is EAGSTPSPAPVSVNEPKPAAPT.

This sequence belongs to the DNA mismatch repair MutS family.

Its function is as follows. This protein is involved in the repair of mismatches in DNA. It is possible that it carries out the mismatch recognition step. This protein has a weak ATPase activity. The protein is DNA mismatch repair protein MutS of Marinobacter nauticus (strain ATCC 700491 / DSM 11845 / VT8) (Marinobacter aquaeolei).